The following is an 87-amino-acid chain: DNA-directed RNA polymerase subunit omega (87 aa).

It belongs to the RNA polymerase subunit omega family. The RNAP catalytic core consists of 2 alpha, 1 beta, 1 beta' and 1 omega subunit. When a sigma factor is associated with the core the holoenzyme is formed, which can initiate transcription.

The catalysed reaction is RNA(n) + a ribonucleoside 5'-triphosphate = RNA(n+1) + diphosphate. In terms of biological role, promotes RNA polymerase assembly. Latches the N- and C-terminal regions of the beta' subunit thereby facilitating its interaction with the beta and alpha subunits. The chain is DNA-directed RNA polymerase subunit omega from Pseudomonas savastanoi pv. phaseolicola (strain 1448A / Race 6) (Pseudomonas syringae pv. phaseolicola (strain 1448A / Race 6)).